The chain runs to 847 residues: Leucine--tRNA ligase (847 aa).

Residues 41 to 51 carry the 'HIGH' region motif; the sequence is PYPSGRIHMGH. The 'KMSKS' region signature appears at 619–623; that stretch reads KMSKS. Lys622 contacts ATP.

Belongs to the class-I aminoacyl-tRNA synthetase family.

Its subcellular location is the cytoplasm. The catalysed reaction is tRNA(Leu) + L-leucine + ATP = L-leucyl-tRNA(Leu) + AMP + diphosphate. In Cereibacter sphaeroides (strain ATCC 17029 / ATH 2.4.9) (Rhodobacter sphaeroides), this protein is Leucine--tRNA ligase.